The sequence spans 90 residues: 10 kDa anti-sigma factor (90 aa).

In terms of assembly, interacts with the host sigma factor RpoD, and thereby inhibits its interaction with the catalytic core of the host RNA polymerase.

Functionally, transcriptional inhibitor. Inhibits sigma 70-directed transcription by weakening its interaction with the core of the host's RNA polymerase. This allows Gp55 to successfully compete for the core enzyme. Plays an important role during the prereplicative period of phage T4 development. This chain is 10 kDa anti-sigma factor (asiA), found in Enterobacteria phage T4 (Bacteriophage T4).